The following is a 201-amino-acid chain: Recombination protein RecR (201 aa).

A C4-type zinc finger spans residues 60 to 75 (CRRCGNVDVCDPCTIC). Residues 83–178 (RTLVVVADVG…RVTRLAQGVP (96 aa)) form the Toprim domain.

The protein belongs to the RecR family.

Its function is as follows. May play a role in DNA repair. It seems to be involved in an RecBC-independent recombinational process of DNA repair. It may act with RecF and RecO. This chain is Recombination protein RecR, found in Xanthobacter autotrophicus (strain ATCC BAA-1158 / Py2).